The chain runs to 306 residues: Tryptophan 2,3-dioxygenase (306 aa).

Substrate-binding positions include 75 to 79 (FIIQH), tyrosine 137, and arginine 141. Histidine 264 provides a ligand contact to heme. Residue threonine 278 coordinates substrate.

This sequence belongs to the tryptophan 2,3-dioxygenase family. As to quaternary structure, homotetramer. It depends on heme as a cofactor.

The enzyme catalyses L-tryptophan + O2 = N-formyl-L-kynurenine. It functions in the pathway amino-acid degradation; L-tryptophan degradation via kynurenine pathway; L-kynurenine from L-tryptophan: step 1/2. In terms of biological role, heme-dependent dioxygenase that catalyzes the oxidative cleavage of the L-tryptophan (L-Trp) pyrrole ring and converts L-tryptophan to N-formyl-L-kynurenine. Catalyzes the oxidative cleavage of the indole moiety. The protein is Tryptophan 2,3-dioxygenase of Paraburkholderia phytofirmans (strain DSM 17436 / LMG 22146 / PsJN) (Burkholderia phytofirmans).